The sequence spans 486 residues: MVENQRAMPQPEMRRIRRIHFVGIGGVGMCGIAEVLLNLGYEVSGSDLKGSAVTERLESFGAQIFVGHRAENTVGADVLVVSSAVNTSNPEVATALERRIPVVPRAEMLAELMRYRHGIAVAGTHGKTTTTSLIASVFAAGGLDPTFVIGGRLNAAGTNAQLGTSRYLIAEADESDASFLHLQPLVAVVTNIDADHMATYEGDFNKLKKTFVEFLHNLPFYGLAVMCIDDPVVREILPLVKRPTLTYGFSESADIRAINVRQDGMLTFFTVLRRDREPLDVSVNMPGNHNVLNSLATIAIATDEGVSDEAIVQGLSGFQGVGRRFQVYGELPVEGGNVMLVDDYGHHPREVSAVISAVRGGWPDRRLVMVYQPHRFSRTRDLYDDFVQVLADANVLLLMEVYPAGEEPIPGADSRNLCHSIRQRGQLDPIYIERGVELAPLVKPLLRAGDILLCQGAGDIGGLAPQLLKSPLFAGAKAAPTEGKLK.

Residue 123 to 129 (GTHGKTT) participates in ATP binding.

The protein belongs to the MurCDEF family.

It is found in the cytoplasm. It catalyses the reaction UDP-N-acetyl-alpha-D-muramate + L-alanine + ATP = UDP-N-acetyl-alpha-D-muramoyl-L-alanine + ADP + phosphate + H(+). The protein operates within cell wall biogenesis; peptidoglycan biosynthesis. Cell wall formation. This is UDP-N-acetylmuramate--L-alanine ligase from Pseudomonas savastanoi pv. phaseolicola (strain 1448A / Race 6) (Pseudomonas syringae pv. phaseolicola (strain 1448A / Race 6)).